The sequence spans 177 residues: Ribonuclease M5 (177 aa).

Residues 5–99 form the Toprim domain; that stretch reads KQIIIVEGKT…NKTSKKIGIA (95 aa). Mg(2+) contacts are provided by E11, D59, and D61.

This sequence belongs to the ribonuclease M5 family. It depends on Mg(2+) as a cofactor.

It is found in the cytoplasm. It catalyses the reaction Endonucleolytic cleavage of RNA, removing 21 and 42 nucleotides, respectively, from the 5'- and 3'-termini of a 5S-rRNA precursor.. Required for correct processing of both the 5' and 3' ends of 5S rRNA precursor. Cleaves both sides of a double-stranded region yielding mature 5S rRNA in one step. This is Ribonuclease M5 from Mycoplasma mycoides subsp. mycoides SC (strain CCUG 32753 / NCTC 10114 / PG1).